The sequence spans 228 residues: Lipoprotein-releasing system ATP-binding protein LolD (228 aa).

One can recognise an ABC transporter domain in the interval L5–A228. Position 41 to 48 (G41 to S48) interacts with ATP.

The protein belongs to the ABC transporter superfamily. Lipoprotein translocase (TC 3.A.1.125) family. As to quaternary structure, the complex is composed of two ATP-binding proteins (LolD) and two transmembrane proteins (LolC and LolE).

The protein resides in the cell inner membrane. Its function is as follows. Part of the ABC transporter complex LolCDE involved in the translocation of mature outer membrane-directed lipoproteins, from the inner membrane to the periplasmic chaperone, LolA. Responsible for the formation of the LolA-lipoprotein complex in an ATP-dependent manner. In Vibrio cholerae serotype O1 (strain ATCC 39315 / El Tor Inaba N16961), this protein is Lipoprotein-releasing system ATP-binding protein LolD.